We begin with the raw amino-acid sequence, 316 residues long: MEIVLANPRGFCAGVDRAIAIVNRALECFNPPIYVRHEVVHNKFVVDDLRQRGAIFVDELDQVPDDSIVIFSAHGVSKAVQQEAEHRGLKVFDATCPLVTKVHIEVTKYAREGTEAILIGHEGHPEVEGTMGQYDKSKGGHIYLVEDEADVEALAVNHPEKLAFVTQTTLSIDDTAKVIDALRTKFPQIQGPRKDDICYATQNRQDAVRDLASRCDVVLVVGSPNSSNSNRLRELAERMGKAAYLVDNADQLEQQWFDGVAKIGVTAGASAPEILIKQVIQRLQDWGAEAPKELDGREENITFSLPKELRIQVTQA.

Position 12 (Cys-12) interacts with [4Fe-4S] cluster. (2E)-4-hydroxy-3-methylbut-2-enyl diphosphate is bound by residues His-41 and His-74. Dimethylallyl diphosphate-binding residues include His-41 and His-74. Isopentenyl diphosphate-binding residues include His-41 and His-74. Cys-96 contacts [4Fe-4S] cluster. His-124 is a (2E)-4-hydroxy-3-methylbut-2-enyl diphosphate binding site. His-124 is a binding site for dimethylallyl diphosphate. His-124 contacts isopentenyl diphosphate. The active-site Proton donor is Glu-126. A (2E)-4-hydroxy-3-methylbut-2-enyl diphosphate-binding site is contributed by Thr-168. Cys-198 contacts [4Fe-4S] cluster. 4 residues coordinate (2E)-4-hydroxy-3-methylbut-2-enyl diphosphate: Ser-226, Ser-227, Asn-228, and Ser-270. Dimethylallyl diphosphate-binding residues include Ser-226, Ser-227, Asn-228, and Ser-270. Residues Ser-226, Ser-227, Asn-228, and Ser-270 each contribute to the isopentenyl diphosphate site.

This sequence belongs to the IspH family. Requires [4Fe-4S] cluster as cofactor.

It carries out the reaction isopentenyl diphosphate + 2 oxidized [2Fe-2S]-[ferredoxin] + H2O = (2E)-4-hydroxy-3-methylbut-2-enyl diphosphate + 2 reduced [2Fe-2S]-[ferredoxin] + 2 H(+). It catalyses the reaction dimethylallyl diphosphate + 2 oxidized [2Fe-2S]-[ferredoxin] + H2O = (2E)-4-hydroxy-3-methylbut-2-enyl diphosphate + 2 reduced [2Fe-2S]-[ferredoxin] + 2 H(+). Its pathway is isoprenoid biosynthesis; dimethylallyl diphosphate biosynthesis; dimethylallyl diphosphate from (2E)-4-hydroxy-3-methylbutenyl diphosphate: step 1/1. It participates in isoprenoid biosynthesis; isopentenyl diphosphate biosynthesis via DXP pathway; isopentenyl diphosphate from 1-deoxy-D-xylulose 5-phosphate: step 6/6. Catalyzes the conversion of 1-hydroxy-2-methyl-2-(E)-butenyl 4-diphosphate (HMBPP) into a mixture of isopentenyl diphosphate (IPP) and dimethylallyl diphosphate (DMAPP). Acts in the terminal step of the DOXP/MEP pathway for isoprenoid precursor biosynthesis. This Acinetobacter baylyi (strain ATCC 33305 / BD413 / ADP1) protein is 4-hydroxy-3-methylbut-2-enyl diphosphate reductase.